A 258-amino-acid chain; its full sequence is UPF0246 protein Shew_1093 (258 aa).

Belongs to the UPF0246 family.

In Shewanella loihica (strain ATCC BAA-1088 / PV-4), this protein is UPF0246 protein Shew_1093.